A 677-amino-acid polypeptide reads, in one-letter code: MCGIFAYLNFHANKERRYILDVLFNGLRRLEYRGYDSAGIAIDNSSPSSSPLVFRQAGNIESLVNSVNEEITNTDLNLDEVFYFHAGIAHTRWATHGEPAPRNSHPQSSGPGDDFLVVHNGVITNYEVLKETLVRHGFTFESDTDTEVIPKLAKFVFDKANEEGGQTVTFCEVVFEVMRHLEGAYALIFKSWHYPNELIACKLGSPLLLGVKELDQGESNSHVFQDAHFLSKNDHPKEFFLSSDPHALVEHTKKVLVIEDGEVVNLKDGGVSILKFENERGRCNGLSRPASVERALSVLEMEVEQISKGKYDHYMQKEIHEQPESLTTTMRGRLIRGGSRKTKTVLLGGLKDHLKTIRRSRRIVFIGCGTSYNAALASRPILEELSGIPVSMEIASDLWDRQGPIYREDTAVFVSQSGETADTLLALDYARENGALCVGITNTVGSSIARKTHCGVHINAGAEIGVASTKAYTSQIVVMVMLALAIGSDTISSQKRREAIIDGLLDLPYKVKEVLKLDDEMKDLAQLLIDEQSLLVFGRGYNYATALEGALKVKEVALMHSEGILAGEMKHGPLALVDENLPIAVIATRDACFSKQQSVIQQLHARKGRLIVMCSKGDAASVSSSGSCRAIEVPQVEDCLQPVINIVPLQLLAYHLTVLRGHNVDQPRNLAKSVTTQ.

Catalysis depends on C2, which acts as the Nucleophile. Positions 2–269 constitute a Glutamine amidotransferase type-2 domain; that stretch reads CGIFAYLNFH…DGEVVNLKDG (268 aa). SIS domains follow at residues 353-492 and 524-667; these read HLKT…DTIS and LAQL…VDQP. Substrate contacts are provided by residues 370–371, 415–417, T420, and H571; these read TS and SQS.

Homotetramer, may also exist as homodimers. As to expression, highly expressed in flowers specifically in mature anthers, mature pollen grains and pollen tubes. Barely observed in roots, leaves and stems.

It carries out the reaction D-fructose 6-phosphate + L-glutamine = D-glucosamine 6-phosphate + L-glutamate. Its pathway is nucleotide-sugar biosynthesis; UDP-N-acetyl-alpha-D-glucosamine biosynthesis; alpha-D-glucosamine 6-phosphate from D-fructose 6-phosphate: step 1/1. Its function is as follows. Controls the flux of glucose into the hexosamine biosynthetic pathway (HBP) leading to glucosamine (GlcN) content homeostasis. Involved in regulating the availability of precursors for N- and O-linked glycosylation of proteins. Required during pollen maturation and pollen tube formation by triggering polar deposition of pectin and callose in the pollen cell wall. Promotes tolerance to tunicamycin (Tm), an inhibitor of proteins N-glycosylation in endoplasmic reticulum (ER). The protein is Glutamine--fructose-6-phosphate aminotransferase [isomerizing] 1 of Arabidopsis thaliana (Mouse-ear cress).